The following is a 538-amino-acid chain: Chaperonin GroEL 1 (538 aa).

Residues 29-32, 86-90, G413, and D494 contribute to the ATP site; these read TLGP and DGTTT.

This sequence belongs to the chaperonin (HSP60) family. Forms a cylinder of 14 subunits composed of two heptameric rings stacked back-to-back. Interacts with the co-chaperonin GroES.

Its subcellular location is the cytoplasm. The catalysed reaction is ATP + H2O + a folded polypeptide = ADP + phosphate + an unfolded polypeptide.. In terms of biological role, together with its co-chaperonin GroES, plays an essential role in assisting protein folding. The GroEL-GroES system forms a nano-cage that allows encapsulation of the non-native substrate proteins and provides a physical environment optimized to promote and accelerate protein folding. The sequence is that of Chaperonin GroEL 1 from Mycolicibacterium paratuberculosis (strain ATCC BAA-968 / K-10) (Mycobacterium paratuberculosis).